The following is an 894-amino-acid chain: CWF19-like protein 2 (894 aa).

The segment at 1 to 147 (MATSMAAASG…DEKSGKDDTQ (147 aa)) is disordered. Residues 13–56 (ESAKSIEERKEQTRNARAEVLRQAKANFEKEERRKELKRLRGED) show a composition bias toward basic and acidic residues. The stretch at 13-107 (ESAKSIEERK…KKQKYEKNNE (95 aa)) forms a coiled coil. Phosphoserine is present on Ser75. Residues 76 to 99 (VKKKKKKDKHSKKAKKEKKKKSKK) are compositionally biased toward basic residues. The span at 128-147 (PDKEKAWKVKDEKSGKDDTQ) shows a compositional bias: basic and acidic residues. The stretch at 166-281 (SSSSLKAEKE…AEKAASTKED (116 aa)) forms a coiled coil. Lys171 is covalently cross-linked (Glycyl lysine isopeptide (Lys-Gly) (interchain with G-Cter in SUMO2)). The span at 270-284 (EDAEKAASTKEDYRR) shows a compositional bias: basic and acidic residues. A disordered region spans residues 270-483 (EDAEKAASTK…STFAGSPERE (214 aa)). Polar residues predominate over residues 320–330 (TTDTAKNSNNE). Residues 332–352 (FIGDEKDKRPGSLETCRRESN) show a composition bias toward basic and acidic residues. Residues Ser360 and Ser372 each carry the phosphoserine modification. Composition is skewed to basic and acidic residues over residues 410 to 430 (KNSEERLTSWSRSDGRGDKKH) and 440 to 473 (TDEHQHVPEDPREKSQDEVLRDDPPKKEHLRDTK). 2 positions are modified to phosphoserine: Ser479 and Ser484. The stretch at 502–530 (KAEMMGNMELAEQLKVQLEKANKFKETIT) forms a coiled coil. A disordered region spans residues 561–583 (NTPGKSLESQGGRRKRQMVSTHE). Lys604 participates in a covalent cross-link: Glycyl lysine isopeptide (Lys-Gly) (interchain with G-Cter in SUMO2). Residues 644-675 (AAERERLGEEEENQRKKAIAEHRSLAAQMEKC) adopt a coiled-coil conformation.

This sequence belongs to the CWF19 family.

The protein is CWF19-like protein 2 (CWF19L2) of Homo sapiens (Human).